The following is a 267-amino-acid chain: 27 kDa primary mesenchyme-specific spicule protein (267 aa).

Positions 1 to 16 (MKLLAILLVLPALCFG) are cleaved as a signal peptide. Positions 20-64 (EGPGMGPGMGPGMGPGMGPGMGPGMGPGMGPGMGPGQGQGQGQGQ) are 11 X 4 AA tandem repeats of G-[PQ]-G-[MQ]. Tandem repeats lie at residues 21–24 (GPGM), 25–28 (GPGM), 29–32 (GPGM), 33–36 (GPGM), 37–40 (GPGM), 41–44 (GPGM), 45–48 (GPGM), 49–52 (GPGM), 53–56 (GPGQ), 57–60 (GQGQ), and 61–64 (GQGQ). Positions 44-68 (MGPGMGPGMGPGQGQGQGQGQGQVG) are disordered. The 142-residue stretch at 79-220 (IGQQCFKMMS…CDEPMYFACS (142 aa)) folds into the C-type lectin domain. Intrachain disulfides connect cysteine 100–cysteine 219 and cysteine 197–cysteine 211.

In terms of tissue distribution, expressed specifically in the micromere/primary mesenchyme cells (PMC) lineage. Produced uniformly and exclusively by PMCs through the early prism stage and this specificity is further restricted during skeletogenesis to a subpopulation of PMCs associated with the growing tips of the spicules.

Its subcellular location is the secreted. Functionally, may play a role in the regulation or execution of skeletal growth. The protein is 27 kDa primary mesenchyme-specific spicule protein (PM27) of Strongylocentrotus purpuratus (Purple sea urchin).